Here is a 616-residue protein sequence, read N- to C-terminus: MMQVLLVTISLAVFPYQGSSIILESGNVNDYEVVYPQKVTAMPKGAVKQPEQKYEDAMQYEFKVKGEPVVLLLEKNKDLFSEDYSETHYSPDGREITTNPPVEDHCYYHGRIQNDADSSASISACNGLKGHFMLQGETYLIEPLKLPDSEAHAVYKYENVEKEDEAPKMCGVTQTNWESDEPIKKASQLNLTPEQRRYLNSPKYIKLVIVADYIMFLKYGRSLITIRTRIYEIVNILNVIYRVLNIYIALLGLEIWNNGDKINVLPETKVTLDLFGKWRERDLLNRRKHDNAQLLTDINFNGPTAGLGYVGSMCDPQYSAGIVQDHNKVNFLVALAMAHEMGHNLGMEHDEIHCTCGAKSCIMSGTLSCEASIRFSNCSREEHQKYLINKMPQCILNKPLKTDIVSPAVCGNYLVELGEDCDCGSPRDCQNPCCNAATCKLTPGSQCADGECCDQCKFRRAGTVCRPANGECDVSDLCTGQSAECPTDQFQRNGQPCQNNNGYCYSGTCPIMGKQCISLFGASATVAQDACFQFNSLGNEYGYCRKENGRKIPCAPQDVKCGRLYCFDNLPEHKNPCQIYYTPSDENKGMVDPGTKCGDGKACSSNRQCVDVNTAY.

Residues 1–20 (MMQVLLVTISLAVFPYQGSS) form the signal peptide. A propeptide spanning residues 21 to 194 (IILESGNVND…KASQLNLTPE (174 aa)) is cleaved from the precursor. Q195 bears the Pyrrolidone carboxylic acid mark. The Peptidase M12B domain maps to 203-399 (KYIKLVIVAD…KMPQCILNKP (197 aa)). Cystine bridges form between C314–C394, C354–C378, and C356–C361. Position 339 (H339) interacts with Zn(2+). E340 is an active-site residue. Positions 343 and 349 each coordinate Zn(2+). Residue N377 is glycosylated (N-linked (GlcNAc...) asparagine). Residues 407-493 (PAVCGNYLVE…ECPTDQFQRN (87 aa)) enclose the Disintegrin domain. Ca(2+) is bound by residues V409, N412, L414, E416, E419, and D422. 14 cysteine pairs are disulfide-bonded: C410–C439, C421–C434, C423–C429, C433–C456, C447–C453, C452–C478, C465–C485, C472–C504, C497–C509, C516–C566, C531–C577, C544–C554, C561–C603, and C597–C609. The D/ECD-tripeptide signature appears at 471–473 (ECD).

The protein belongs to the venom metalloproteinase (M12B) family. P-III subfamily. P-IIIc sub-subfamily. In terms of assembly, heterodimer; disulfide-linked. Zn(2+) serves as cofactor. Post-translationally, the N-terminus is blocked. In terms of tissue distribution, expressed by the venom gland.

The protein resides in the secreted. Its activity is regulated as follows. Inhibited by EDTA or 1,10-phenanthroline. Not inhibited by PMSF. Functionally, snake venom zinc metalloprotease that hydrolyzes the alpha-chain (FGA) and more slowly the beta-chain (FGB) of fibrinogen, without affecting the gamma-chain. Cleaves alpha-chain of fibrinogen at '432-Lys-|-Leu-433' and '535-Pro-|-Met-536' bonds. Induces apoptosis in vascular endothelial cells and inhibits endothelial cell adhesion to extracellular matrix proteins such as fibrinogen, fibronectin, vitronectin, collagen I, and collagen IV. Also hydrolyzes azocasein, and insulin B-chain (at the '38-Ala-|-Leu-39' bond). The protein is Zinc metalloproteinase-disintegrin-like VLAIP-A of Macrovipera lebetinus (Levantine viper).